Reading from the N-terminus, the 367-residue chain is Probable cinnamyl alcohol dehydrogenase (367 aa).

Cysteine 47 contacts Zn(2+). Threonine 49 is an NADP(+) binding site. Positions 69, 70, 100, 103, 106, 114, and 163 each coordinate Zn(2+). Residues threonine 167, 188 to 193 (GLGGVG), 211 to 216 (SSSSKK), threonine 251, glycine 275, and 298 to 300 (SFI) contribute to the NADP(+) site.

Belongs to the zinc-containing alcohol dehydrogenase family. Homodimer. Requires Zn(2+) as cofactor.

It catalyses the reaction (E)-cinnamyl alcohol + NADP(+) = (E)-cinnamaldehyde + NADPH + H(+). The enzyme catalyses (E)-coniferol + NADP(+) = (E)-coniferaldehyde + NADPH + H(+). The catalysed reaction is (E)-sinapyl alcohol + NADP(+) = (E)-sinapaldehyde + NADPH + H(+). It carries out the reaction (E)-4-coumaroyl alcohol + NADP(+) = (E)-4-coumaraldehyde + NADPH + H(+). It catalyses the reaction (E)-caffeyl alcohol + NADP(+) = (E)-caffeyl aldehyde + NADPH + H(+). It functions in the pathway aromatic compound metabolism; phenylpropanoid biosynthesis. Involved in lignin biosynthesis. May catalyze the final step specific for the production of lignin monomers, like coniferyl alcohol, sinapyl alcohol and 4-coumaryl alcohol. In Zea mays (Maize), this protein is Probable cinnamyl alcohol dehydrogenase.